The chain runs to 640 residues: Threonine--tRNA ligase (640 aa).

In terms of domain architecture, TGS spans 1 to 61; it reads MPVITLPDGS…SNDATLQIIT (61 aa). The segment at 242–533 is catalytic; it reads DHRKIGKQLD…LIEHYAGVFP (292 aa). Zn(2+) is bound by residues C333, H384, and H510.

Belongs to the class-II aminoacyl-tRNA synthetase family. Homodimer. Zn(2+) is required as a cofactor.

It localises to the cytoplasm. It catalyses the reaction tRNA(Thr) + L-threonine + ATP = L-threonyl-tRNA(Thr) + AMP + diphosphate + H(+). Functionally, catalyzes the attachment of threonine to tRNA(Thr) in a two-step reaction: L-threonine is first activated by ATP to form Thr-AMP and then transferred to the acceptor end of tRNA(Thr). Also edits incorrectly charged L-seryl-tRNA(Thr). This is Threonine--tRNA ligase from Pseudomonas putida (strain ATCC 47054 / DSM 6125 / CFBP 8728 / NCIMB 11950 / KT2440).